A 69-amino-acid chain; its full sequence is Beta-defensin 43 (69 aa).

Positions 1-22 are cleaved as a signal peptide; it reads MRVLFSILGVLTLLSIVPLARS. 2 cysteine pairs are disulfide-bonded: Cys29–Cys56 and Cys35–Cys49.

The protein belongs to the beta-defensin family.

It localises to the secreted. Its function is as follows. Has bactericidal activity. The sequence is that of Beta-defensin 43 (Defb43) from Mus musculus (Mouse).